Reading from the N-terminus, the 148-residue chain is Cystatin-C (148 aa).

Residues 1 to 28 (MARSLGVPLLLLAALVVALALAVSPAAG) form the signal peptide. A Secondary area of contact motif is present at residues 83-87 (QIVSG). Cystine bridges form between C101/C111 and C125/C145.

Belongs to the cystatin family.

The protein resides in the secreted. In terms of biological role, this is a thiol proteinase inhibitor. The sequence is that of Cystatin-C (CST3) from Oryctolagus cuniculus (Rabbit).